A 154-amino-acid chain; its full sequence is 17 kDa surface antigen (154 aa).

The first 19 residues, 1 to 19 (MKLLSKIMIIALAASMLQA), serve as a signal peptide directing secretion. A lipid anchor (N-palmitoyl cysteine) is attached at C20. The S-diacylglycerol cysteine moiety is linked to residue C20.

This sequence belongs to the rickettsiale 17 kDa surface antigen family.

It is found in the cell outer membrane. The chain is 17 kDa surface antigen (omp) from Rickettsia rhipicephali.